Here is a 356-residue protein sequence, read N- to C-terminus: Protein pelota homolog (356 aa).

This sequence belongs to the eukaryotic release factor 1 family. Pelota subfamily. Monomer. The cofactor is a divalent metal cation.

Its subcellular location is the cytoplasm. Functionally, may function in recognizing stalled ribosomes, interact with stem-loop structures in stalled mRNA molecules, and effect endonucleolytic cleavage of the mRNA. May play a role in the release non-functional ribosomes and degradation of damaged mRNAs. Has endoribonuclease activity. In Pyrococcus abyssi (strain GE5 / Orsay), this protein is Protein pelota homolog.